Reading from the N-terminus, the 178-residue chain is UPF0302 protein BCAH187_A1683 (178 aa).

It belongs to the UPF0302 family.

This Bacillus cereus (strain AH187) protein is UPF0302 protein BCAH187_A1683.